We begin with the raw amino-acid sequence, 351 residues long: Type II methyltransferase M.DsaV (351 aa).

The SAM-dependent MTase C5-type domain occupies Leu-6–Thr-312. The active site involves Cys-75.

The protein belongs to the class I-like SAM-binding methyltransferase superfamily. C5-methyltransferase family.

The enzyme catalyses a 2'-deoxycytidine in DNA + S-adenosyl-L-methionine = a 5-methyl-2'-deoxycytidine in DNA + S-adenosyl-L-homocysteine + H(+). Functionally, a methylase, recognizes the double-stranded sequence 5'-CCNGG-3', methylates C-2 on both strands, and protects the DNA from cleavage by the DsaV endonuclease. The sequence is that of Type II methyltransferase M.DsaV from Dactylococcopsis salina (Myxobaktron salinum).